The sequence spans 423 residues: tRNA(Ile)-lysidine synthase (423 aa).

43–48 (SSGVDS) is a binding site for ATP.

The protein belongs to the tRNA(Ile)-lysidine synthase family.

The protein localises to the cytoplasm. It carries out the reaction cytidine(34) in tRNA(Ile2) + L-lysine + ATP = lysidine(34) in tRNA(Ile2) + AMP + diphosphate + H(+). Its function is as follows. Ligates lysine onto the cytidine present at position 34 of the AUA codon-specific tRNA(Ile) that contains the anticodon CAU, in an ATP-dependent manner. Cytidine is converted to lysidine, thus changing the amino acid specificity of the tRNA from methionine to isoleucine. This chain is tRNA(Ile)-lysidine synthase, found in Helicobacter hepaticus (strain ATCC 51449 / 3B1).